Consider the following 425-residue polypeptide: UDP-N-acetylglucosamine 1-carboxyvinyltransferase (425 aa).

22-23 (KN) contacts phosphoenolpyruvate. Arg98 is a binding site for UDP-N-acetyl-alpha-D-glucosamine. The active-site Proton donor is Cys122. 2-(S-cysteinyl)pyruvic acid O-phosphothioketal is present on Cys122. Residues 127 to 131 (RPVDQ), Asp313, and Ile335 contribute to the UDP-N-acetyl-alpha-D-glucosamine site.

The protein belongs to the EPSP synthase family. MurA subfamily.

It is found in the cytoplasm. The enzyme catalyses phosphoenolpyruvate + UDP-N-acetyl-alpha-D-glucosamine = UDP-N-acetyl-3-O-(1-carboxyvinyl)-alpha-D-glucosamine + phosphate. It functions in the pathway cell wall biogenesis; peptidoglycan biosynthesis. In terms of biological role, cell wall formation. Adds enolpyruvyl to UDP-N-acetylglucosamine. The polypeptide is UDP-N-acetylglucosamine 1-carboxyvinyltransferase (Xylella fastidiosa (strain 9a5c)).